The primary structure comprises 485 residues: Glutamyl-tRNA(Gln) amidotransferase subunit A (485 aa).

Residues lysine 74 and serine 149 each act as charge relay system in the active site. Catalysis depends on serine 173, which acts as the Acyl-ester intermediate.

Belongs to the amidase family. GatA subfamily. As to quaternary structure, heterotrimer of A, B and C subunits.

The catalysed reaction is L-glutamyl-tRNA(Gln) + L-glutamine + ATP + H2O = L-glutaminyl-tRNA(Gln) + L-glutamate + ADP + phosphate + H(+). Its function is as follows. Allows the formation of correctly charged Gln-tRNA(Gln) through the transamidation of misacylated Glu-tRNA(Gln) in organisms which lack glutaminyl-tRNA synthetase. The reaction takes place in the presence of glutamine and ATP through an activated gamma-phospho-Glu-tRNA(Gln). In Janthinobacterium sp. (strain Marseille) (Minibacterium massiliensis), this protein is Glutamyl-tRNA(Gln) amidotransferase subunit A.